The chain runs to 120 residues: Large ribosomal subunit protein bL19 (120 aa).

It belongs to the bacterial ribosomal protein bL19 family.

Its function is as follows. This protein is located at the 30S-50S ribosomal subunit interface and may play a role in the structure and function of the aminoacyl-tRNA binding site. This chain is Large ribosomal subunit protein bL19, found in Thermodesulfovibrio yellowstonii (strain ATCC 51303 / DSM 11347 / YP87).